We begin with the raw amino-acid sequence, 507 residues long: Glycogen synthase (507 aa).

K15 lines the ADP-alpha-D-glucose pocket.

The protein belongs to the glycosyltransferase 1 family. Bacterial/plant glycogen synthase subfamily.

It catalyses the reaction [(1-&gt;4)-alpha-D-glucosyl](n) + ADP-alpha-D-glucose = [(1-&gt;4)-alpha-D-glucosyl](n+1) + ADP + H(+). Its pathway is glycan biosynthesis; glycogen biosynthesis. Functionally, synthesizes alpha-1,4-glucan chains using ADP-glucose. The polypeptide is Glycogen synthase (Rhodopirellula baltica (strain DSM 10527 / NCIMB 13988 / SH1)).